Consider the following 230-residue polypeptide: Protein tumorous testis (230 aa).

The region spanning 37 to 128 is the RRM domain; the sequence is GELFLSCIPR…RELVLKNVES (92 aa).

In terms of assembly, part of a complex composed of at least tut, bam and bgcn; complex formation does not require RNA. Interacts with bam (via N-terminus); the interaction is direct. Interacts with bgcn; the interaction is indirect and is mediated by bam. As part of the bam-bgcn-tut complex associates with twin; may recruit the CCR4-NOT1 deadenylation complex to mRNA 3'UTRs to mediate post-transcriptional regulation of expression.

It is found in the cytoplasm. Its function is as follows. RNA binding protein that forms a complex with bam and bgcn, involved in 3'UTR-dependent regulation of a subset of mRNAs. Preferentially binds a long isoform of mei-P26 transcripts. Involved in 3'UTR-dependent post-transcriptional repression of several 3'-RNA processing factors. Involved in promoting germline stem cell lineage differentiation and mitosis-to-meiosis transition. Required for proper transit amplification of spermatogonia. The sequence is that of Protein tumorous testis from Drosophila melanogaster (Fruit fly).